Reading from the N-terminus, the 256-residue chain is Geranylgeranylglyceryl phosphate synthase (256 aa).

Mg(2+)-binding residues include Asp28 and Ser53. Sn-glycerol 1-phosphate contacts are provided by residues 172–178 (YLEAGSG), 203–204 (GG), and 225–226 (GT).

It belongs to the GGGP/HepGP synthase family. Group II subfamily. It depends on Mg(2+) as a cofactor.

It localises to the cytoplasm. It catalyses the reaction sn-glycerol 1-phosphate + (2E,6E,10E)-geranylgeranyl diphosphate = sn-3-O-(geranylgeranyl)glycerol 1-phosphate + diphosphate. It participates in membrane lipid metabolism; glycerophospholipid metabolism. Functionally, prenyltransferase that catalyzes the transfer of the geranylgeranyl moiety of geranylgeranyl diphosphate (GGPP) to the C3 hydroxyl of sn-glycerol-1-phosphate (G1P). This reaction is the first ether-bond-formation step in the biosynthesis of archaeal membrane lipids. The polypeptide is Geranylgeranylglyceryl phosphate synthase (Methanococcus maripaludis (strain C6 / ATCC BAA-1332)).